A 597-amino-acid chain; its full sequence is FERM domain-containing protein 3 (597 aa).

An FERM domain is found at 32-312 (MRCTIRLLDD…ENQAFYKYAK (281 aa)). A disordered region spans residues 409–435 (SAPLISSSPVKAAQEYEDPPSEEEDKI). Residues 423–432 (EYEDPPSEEE) show a composition bias toward acidic residues. The helical transmembrane segment at 531-551 (LLVVGLGLLLFVFPLLLLLLE) threads the bilayer.

The protein localises to the membrane. Functionally, putative tumor suppressor gene that may be implicated in the origin and progression of lung cancer. The chain is FERM domain-containing protein 3 (FRMD3) from Pongo abelii (Sumatran orangutan).